A 707-amino-acid polypeptide reads, in one-letter code: Molybdenum cofactor sulfurase (707 aa).

Position 206 is an N6-(pyridoxal phosphate)lysine (Lys-206). Cys-365 is an active-site residue. In terms of domain architecture, MOSC spans 558–705 (QWLENALDMT…VEAGSAVRFF (148 aa)).

It belongs to the class-V pyridoxal-phosphate-dependent aminotransferase family. MOCOS subfamily. Requires pyridoxal 5'-phosphate as cofactor.

The catalysed reaction is Mo-molybdopterin + L-cysteine + AH2 = thio-Mo-molybdopterin + L-alanine + A + H2O. Its pathway is cofactor biosynthesis; molybdopterin biosynthesis. Sulfurates the molybdenum cofactor. Sulfation of molybdenum is essential for xanthine dehydrogenase (XDH) and aldehyde oxidase (ADO) enzymes in which molybdenum cofactor is liganded by 1 oxygen and 1 sulfur atom in active form. The chain is Molybdenum cofactor sulfurase (mocs-1) from Caenorhabditis briggsae.